Reading from the N-terminus, the 527-residue chain is Formate--tetrahydrofolate ligase (527 aa).

53–60 (TSSGEGKT) is an ATP binding site.

It belongs to the formate--tetrahydrofolate ligase family.

It catalyses the reaction (6S)-5,6,7,8-tetrahydrofolate + formate + ATP = (6R)-10-formyltetrahydrofolate + ADP + phosphate. It functions in the pathway one-carbon metabolism; tetrahydrofolate interconversion. The polypeptide is Formate--tetrahydrofolate ligase (Acholeplasma laidlawii (strain PG-8A)).